A 33-amino-acid chain; its full sequence is Dermaseptin-4 (33 aa).

Position 33 is a leucine amide (L33).

As to expression, expressed by the skin glands.

It localises to the secreted. In terms of biological role, has antiparasitic activity against trypomastigote form of T.cruzi (IC(50)=0.25 uM) in vitro but not against L.infantum. Probably acts by permeabilizing cell membranes. In vitro, shows no cytotoxicity against macrophages. Has antibacterial activity. This chain is Dermaseptin-4, found in Pithecopus nordestinus (Northeastern Brazilian leaf frog).